Here is a 112-residue protein sequence, read N- to C-terminus: MSEELPIKFTDAAADRVKQLIDEEENPELKLRVYVTGGGCSGFQYGFTFDEKANPGDLEIVKNGVMLVVDPMSLQYLVDGEVDYTEGLEGARFFVTNPHATTTCGCGSSFTI.

Residues C40, C104, and C106 each coordinate iron-sulfur cluster.

The protein belongs to the HesB/IscA family. As to quaternary structure, homodimer. It depends on iron-sulfur cluster as a cofactor.

Functionally, required for insertion of 4Fe-4S clusters for at least IspG. This chain is Iron-sulfur cluster insertion protein ErpA, found in Pseudoalteromonas translucida (strain TAC 125).